Consider the following 644-residue polypeptide: Exoribonuclease 2 (644 aa).

Residues 189–516 enclose the RNB domain; it reads RQDLTALNFV…NHRLLKAVIK (328 aa). The 83-residue stretch at 561–643 folds into the S1 motif domain; it reads NTRFAAEIID…ETRSIIARPA (83 aa).

It belongs to the RNR ribonuclease family. RNase II subfamily.

The protein resides in the cytoplasm. The catalysed reaction is Exonucleolytic cleavage in the 3'- to 5'-direction to yield nucleoside 5'-phosphates.. Functionally, involved in mRNA degradation. Hydrolyzes single-stranded polyribonucleotides processively in the 3' to 5' direction. This chain is Exoribonuclease 2, found in Salmonella choleraesuis (strain SC-B67).